The primary structure comprises 323 residues: D-alanine--D-alanine ligase (323 aa).

Residues 120–319 enclose the ATP-grasp domain; that stretch reads LSVLKPYGIK…LEDLFTNAIE (200 aa). Position 148–203 (148–203) interacts with ATP; it reads VKKVGLPCFVKPNKAGSSFGISKVKSEAELPIAIEVAYKEDNEIIIESFLDGTEVS. Mg(2+)-binding residues include Glu-274, Glu-286, and Asn-288.

Belongs to the D-alanine--D-alanine ligase family. The cofactor is Mg(2+). Mn(2+) serves as cofactor.

The protein localises to the cytoplasm. It catalyses the reaction 2 D-alanine + ATP = D-alanyl-D-alanine + ADP + phosphate + H(+). It participates in cell wall biogenesis; peptidoglycan biosynthesis. Its function is as follows. Cell wall formation. The sequence is that of D-alanine--D-alanine ligase from Flavobacterium johnsoniae (strain ATCC 17061 / DSM 2064 / JCM 8514 / BCRC 14874 / CCUG 350202 / NBRC 14942 / NCIMB 11054 / UW101) (Cytophaga johnsonae).